The primary structure comprises 420 residues: Dachshund homolog dac-1 (420 aa).

Residues 23–77 are disordered; that stretch reads PSSSSSSSNNSSSNTSSSNFLSPYEYQESSTSPRDTTDSSGESSLSSSGSSSSLN. 2 stretches are compositionally biased toward low complexity: residues 24–41 and 51–77; these read SSSS…SSSN and SSTS…SSLN. The segment at 85–171 is DACHbox-N; the sequence is KLIKFRGHNV…LLKTSDFEKL (87 aa). Residues 242 to 258 show a composition bias toward basic and acidic residues; that stretch reads NSFERADDDDQNQRDAD. The tract at residues 242 to 321 is disordered; sequence NSFERADDDD…SSSSSGKNDE (80 aa). Residues 263 to 273 are compositionally biased toward polar residues; the sequence is LNLSKSGGNSE. Positions 297-317 are enriched in low complexity; sequence GGSNSNSLSMSMEAGSSSSSG.

The protein belongs to the DACH/dachshund family. As to expression, expressed in AFD, AWC, ASE and ASK neurons. Expressed in the alae.

The protein resides in the nucleus. In terms of biological role, transcription factor. Plays a role in the thermotactic response. This chain is Dachshund homolog dac-1, found in Caenorhabditis elegans.